Reading from the N-terminus, the 149-residue chain is MNIRQAKTSDAAAIAPLFNQYREFYRQASDLQGAEAFLKARLENHESVILIAEENGEFIGFTQLYPTFSSVSMKRIYILNDLFVVPHARTKGAGGRLLSAAKDYAGQNGAKCLTLQTEHHNRKARSLYEQNGYEEDTGFVHYCLNVPAK.

The 149-residue stretch at 1-149 (MNIRQAKTSD…VHYCLNVPAK (149 aa)) folds into the N-acetyltransferase domain.

It belongs to the acetyltransferase family.

This is an uncharacterized protein from Bacillus subtilis (strain 168).